A 250-amino-acid polypeptide reads, in one-letter code: U6 snRNA phosphodiesterase 1 (250 aa).

Positions 1 to 31 are disordered; it reads MALVSYSSSEEDEGETSEPPGRRLPPLPPPT. Residues 22 to 31 are compositionally biased toward pro residues; sequence RRLPPLPPPT. The active-site Proton acceptor is His-105. Residue 105–107 coordinates AMP; sequence HIS. Residues Gln-149, Tyr-187, and 191–195 each bind UMP; that span reads SFHVS. AMP is bound by residues Tyr-187 and 189–195; that span reads EPSFHVS. His-193 acts as the Proton donor in catalysis.

The protein belongs to the 2H phosphoesterase superfamily. USB1 family.

The protein localises to the nucleus. The enzyme catalyses a 3'-end uridylyl-uridine-RNA = a 3'-end 2',3'-cyclophospho-uridine-RNA + uridine. It catalyses the reaction a 3'-end uridylyl-adenosine-RNA = a 3'-end 2',3'-cyclophospho-uridine-RNA + adenosine. Its function is as follows. 3'-5' RNA exonuclease that trims the 3' end of oligo(U) and oligo(A) tracts of the pre-U6 small nuclear RNA (snRNA) molecule, leading to the formation of a mature U6 snRNA 3' end-terminated with a 2',3'-cyclic phosphate. Participates in the U6 snRNA 3' end processing that prevents U6 snRNA degradation. In addition also removes uridines from the 3' end of U6atac snRNA and possibly the vault RNA VTRNA1-1. The chain is U6 snRNA phosphodiesterase 1 from Xenopus laevis (African clawed frog).